A 770-amino-acid chain; its full sequence is Cullin-1 (770 aa).

The Cullin neddylation domain occupies 700–761 (DRKLQIQAAI…EKEYLMRVEG (62 aa)). Lysine 714 is covalently cross-linked (Glycyl lysine isopeptide (Lys-Gly) (interchain with G-Cter in NEDD8)).

The protein belongs to the cullin family. As to quaternary structure, part of a complex that includes culA, fbxA and regA. Formation of this complex is dependent on the MAP kinase erkB. In terms of processing, neddylated; which enhances the ubiquitination activity of SCF.

It functions in the pathway protein modification; protein ubiquitination. Probable core component of cullin-based SCF-like E3 ubiquitin-protein ligase complexes which mediate the ubiquitination and subsequent proteasomal degradation of target proteins. The E3 ubiquitin-protein ligase activity of the complex is dependent on the neddylation of the cullin subunit. Required at several stages during development. CulA and fbxA regulate multicellular development by targeting regA for degradation via a pathway that requires erkB function, leading to an increase in cAMP and PKA activity. This Dictyostelium discoideum (Social amoeba) protein is Cullin-1 (culA).